Here is a 254-residue protein sequence, read N- to C-terminus: Zinc finger FYVE domain-containing protein 21 (254 aa).

Residues 44–104 (DKECPRCMQC…QCAGCAPVSR (61 aa)) form an FYVE-type zinc finger. Positions 50, 53, 66, 69, 74, 77, 96, and 99 each coordinate Zn(2+). Residues 107–254 (ADFYDRQLKL…AKLLYESRDQ (148 aa)) form a PH-like region.

In terms of assembly, interacts with PTK2/FAK1.

It is found in the cell junction. It localises to the focal adhesion. The protein localises to the cytoplasmic vesicle. Its subcellular location is the endosome. In terms of biological role, plays a role in cell adhesion, and thereby in cell motility which requires repeated formation and disassembly of focal adhesions. Regulates microtubule-induced PTK2/FAK1 dephosphorylation, an event important for focal adhesion disassembly, as well as integrin beta-1/ITGB1 cell surface expression. The chain is Zinc finger FYVE domain-containing protein 21 (ZFYVE21) from Bos taurus (Bovine).